We begin with the raw amino-acid sequence, 490 residues long: Protein U94 (490 aa).

The 210-residue stretch at 1 to 210 folds into the PV NS1-Nuc domain; the sequence is MFSIINPSDD…SHFNKKPNVK (210 aa). An SF3 helicase domain is found at 312–463; the sequence is DPILAGTILY…IPRNFPVIQK (152 aa). 338-345 serves as a coordination point for ATP; it reads GPPGCGKS.

Its subcellular location is the host nucleus. The sequence is that of Protein U94 (U94) from Human herpesvirus 6B (HHV-6 variant B).